We begin with the raw amino-acid sequence, 278 residues long: E3 ubiquitin-protein ligase CHIP (278 aa).

TPR repeat units follow at residues 10-43 (AERL…SPNV), 45-77 (AYWT…VHNS), and 78-111 (VKAH…GRCS). Residues 143–194 (ELNSLKETCEAALNQQRALDMSRTEESSDEAYTAHTERLKALERVFKKAAEE) adopt a coiled-coil conformation. Residues 199 to 273 (EVPDYLCCNI…AAYLEKHVWA (75 aa)) form the U-box domain.

As to quaternary structure, interacts with HSC70-4, PP2AA1, PP2AA3 and PP2A5, as well as with UBC8, UBC9 and UBC10. Also interacts with the chloroplastic proteolytic subunits ClpP4, FtsH1 and FtsH2.

It catalyses the reaction S-ubiquitinyl-[E2 ubiquitin-conjugating enzyme]-L-cysteine + [acceptor protein]-L-lysine = [E2 ubiquitin-conjugating enzyme]-L-cysteine + N(6)-ubiquitinyl-[acceptor protein]-L-lysine.. Its pathway is protein modification; protein ubiquitination. Functionally, has E3 ubiquitin-protein ligase activity and may target misfolded substrates towards proteasomal degradation. Regulates the activity of some serine/threonine-protein phosphatases by E3 ubiquitin-protein ligase activity. Required for responses to biotic and abiotic stresses such as auxin, abscisic acid (ABA), low and high temperature and darkness, probably through the activation of serine/threonine-protein phosphatase and the subsequent modification of the plasma membrane composition. Regulates the chloroplastic Clp proteolytic activity in response to stresses. Ubiquitylates FtsH1, a component of the chloroplast FtsH protease, and affects protein degradation in chloroplasts. Mediates plastid precursor degradation to prevent cytosolic precursor accumulation, together with the molecular chaperone HSC70-4. Mediates ubiquitination of transit peptides and thereby led to their degradation through the ubiquitin-proteasome system. In Arabidopsis thaliana (Mouse-ear cress), this protein is E3 ubiquitin-protein ligase CHIP.